The primary structure comprises 144 residues: Large ribosomal subunit protein uL15 (144 aa).

A disordered region spans residues 1 to 60 (MRLNSLRPAAGSRPDANRVGRGAGTGNGKTAGRGHKGQHSRSGGFTKVGFEGGQMPLQRR). Gly residues predominate over residues 21 to 31 (RGAGTGNGKTA).

It belongs to the universal ribosomal protein uL15 family. As to quaternary structure, part of the 50S ribosomal subunit.

Its function is as follows. Binds to the 23S rRNA. The chain is Large ribosomal subunit protein uL15 from Alkalilimnicola ehrlichii (strain ATCC BAA-1101 / DSM 17681 / MLHE-1).